We begin with the raw amino-acid sequence, 270 residues long: tRNA pseudouridine synthase A (270 aa).

Residue D60 is the Nucleophile of the active site. The tract at residues 107–111 (FHARF) is RNA binding. Y118 contributes to the substrate binding site. The interval 168–172 (QCQSR) is interaction with tRNA.

It belongs to the tRNA pseudouridine synthase TruA family. In terms of assembly, homodimer.

The catalysed reaction is uridine(38/39/40) in tRNA = pseudouridine(38/39/40) in tRNA. Functionally, formation of pseudouridine at positions 38, 39 and 40 in the anticodon stem and loop of transfer RNAs. The chain is tRNA pseudouridine synthase A from Shigella boydii serotype 18 (strain CDC 3083-94 / BS512).